The following is a 463-amino-acid chain: Type IV secretion system protein PtlD homolog (463 aa).

A signal peptide spans 1-24 (MAGLSRILLSCTLACLLAGQAAQA). 5 helical membrane-spanning segments follow: residues 118–138 (LQPL…YALL), 232–252 (WLLC…LAAS), 253–273 (LLIV…LFLV), 294–314 (ALVF…VLAG), and 333–353 (MLAA…VPLA). A compositionally biased stretch (low complexity) spans 376–410 (AHRQAAARQYAPRPAAAAAAAGPHQAGTYAASATP). The tract at residues 376–463 (AHRQAAARQY…RVLPRKPNLP (88 aa)) is disordered. Over residues 411–420 (APAPARPAPS) the composition is skewed to pro residues. Residues 441–455 (VRRDDRPAPAPDRRV) show a composition bias toward basic and acidic residues.

Its subcellular location is the cell membrane. This chain is Type IV secretion system protein PtlD homolog (ptlD), found in Bordetella parapertussis (strain 12822 / ATCC BAA-587 / NCTC 13253).